The primary structure comprises 591 residues: Zinc finger protein 48 (591 aa).

Position 1 is an N-acetylmethionine (methionine 1). 2 disordered regions span residues 1-24 (MEAS…IKEE) and 55-80 (GLGK…GSND). Composition is skewed to basic and acidic residues over residues 8–24 (EFEH…IKEE) and 55–65 (GLGKRQPRDPV). A Phosphoserine modification is found at serine 12. A Glycyl lysine isopeptide (Lys-Gly) (interchain with G-Cter in SUMO2) cross-link involves residue lysine 58. 2 consecutive C2H2-type zinc fingers follow at residues 83–105 (AVCG…QRTH) and 111–133 (YKCG…QRTH). The tract at residues 131 to 160 (RTHTGEKAYRVRPPAPGPPKMPRSRIPAGE) is disordered. Lysine 150 participates in a covalent cross-link: Glycyl lysine isopeptide (Lys-Gly) (interchain with G-Cter in SUMO2). 2 C2H2-type zinc fingers span residues 163–185 (TICG…QRTH) and 191–213 (YKCG…QRTH). Positions 206-241 (RIKHQRTHRGDQLPRPVVPRRQPSPAAPAAPHRPKA) are disordered. Low complexity predominate over residues 224-235 (PRRQPSPAAPAA). Lysine 240 is covalently cross-linked (Glycyl lysine isopeptide (Lys-Gly) (interchain with G-Cter in SUMO2)). 2 consecutive C2H2-type zinc fingers follow at residues 246–268 (YICT…QRSH) and 274–296 (FGCD…LRVH). Lysine 300 participates in a covalent cross-link: Glycyl lysine isopeptide (Lys-Gly) (interchain with G-Cter in SUMO2). 2 consecutive C2H2-type zinc fingers follow at residues 302–324 (YLCP…LRTH) and 330–352 (HACP…RLTH). The tract at residues 372–429 (PPPPPLGTSPSLTPRSPSHSSDGPFGLPGLEPEPGGPQAGEPPPPLAGDKPHKCPECG) is disordered. Residues 379–404 (TSPSLTPRSPSHSSDGPFGLPGLEPE) show a composition bias toward low complexity. Residues 423–445 (HKCPECGKGFRRSSDLVKHHRVH) form a C2H2-type 9 zinc finger. Lysine 449 participates in a covalent cross-link: Glycyl lysine isopeptide (Lys-Gly) (interchain with G-Cter in SUMO2). The C2H2-type 10 zinc finger occupies 451–473 (YLCPECGKGFADSSARVKHLRTH). Residues 464–512 (SARVKHLRTHQGERTRPPPPPSTLLRPHNPPGSVPIVPQSRVQGRPSGP) are disordered. Over residues 480 to 496 (PPPPPSTLLRPHNPPGS) the composition is skewed to pro residues. 2 C2H2-type zinc fingers span residues 516 to 538 (HVCG…RRTH) and 544 to 566 (YKCA…QRGH). A disordered region spans residues 564 to 591 (RGHLALKPFGVGDGPPRPLKEESPAGLE). Positions 581–591 (PLKEESPAGLE) are enriched in basic and acidic residues. Lysine 583 is covalently cross-linked (Glycyl lysine isopeptide (Lys-Gly) (interchain with G-Cter in SUMO2)).

It belongs to the krueppel C2H2-type zinc-finger protein family.

It localises to the nucleus. Its function is as follows. May be involved in transcriptional regulation. The polypeptide is Zinc finger protein 48 (Znf48) (Mus musculus (Mouse)).